The chain runs to 143 residues: Probable prefoldin subunit 2 (143 aa).

Belongs to the prefoldin subunit beta family. Heterohexamer of two PFD-alpha type and four PFD-beta type subunits.

Binds specifically to cytosolic chaperonin (c-CPN) and transfers target proteins to it. Binds to nascent polypeptide chain and promotes folding in an environment in which there are many competing pathways for nonnative proteins. This is Probable prefoldin subunit 2 from Drosophila melanogaster (Fruit fly).